A 205-amino-acid chain; its full sequence is uncharacterized protein (205 aa).

Transmembrane regions (helical) follow at residues 12–32 (WQIYVGLLLGLIIGLLVGVGF) and 49–69 (WISSLSTLIIMCFTAVGVMSW).

The protein localises to the host membrane. This is an uncharacterized protein from Haemophilus influenzae (Bacteriophage HP1).